We begin with the raw amino-acid sequence, 284 residues long: Tropomyosin (284 aa).

The stretch at 1–284 (MDAIKKKMQA…DMTFTELIGN (284 aa)) forms a coiled coil.

Belongs to the tropomyosin family. In terms of assembly, homodimer.

Its function is as follows. Tropomyosin, in association with the troponin complex, plays a central role in the calcium dependent regulation of muscle contraction. In Periplaneta fuliginosa (Smokybrown cockroach), this protein is Tropomyosin.